Consider the following 509-residue polypeptide: MRDLVLVVDFGGQYNQLIARRVRECGVYCEIIPYTYSIEKIKEKNPKGIIFTGGPNSVYGENTPTLDKEIFNLNVPVLGICYGDQLMAHLLGGKVDTAPVREYGKTNVTLDNSSKLFAGIEADETCWMSHTDYIAEAPEGFKIIAHTDVCPVAAMENEERRLYGVQFHPEVEHTPFGQNMMRNFLYNICGLENSWSMASFAEEKIAEIKKIVGDKKLICALSGGVDSSVAAVMVHKAVGKQLTCIFVDHGLLRKDEGDQVEKIFKEGFDMNLIRVNAQDRFLGKLKGVSDPETKRKIIGEEFIRVFEEEAGKLGDIKFLVQGTIYPDVVESGTDTSAVIKSHHNVGGLPEDMEFSLIEPLRELFKDEVRAVGEELGIPHHLVWRQPFPGPGLAIRVLGEVTEDKLEVVREADAIFREEIALAGLESEIWQYFAVLPNIQSVGVMGDERTYCHTVGLRAVTSSDGMTSNWAHIPYEVIDKVSRRIVNEVKGVNRIVYDVTSKPPATIEWE.

The region spanning 4-194 is the Glutamine amidotransferase type-1 domain; the sequence is LVLVVDFGGQ…LYNICGLENS (191 aa). The active-site Nucleophile is the C81. Catalysis depends on residues H168 and E170. The 190-residue stretch at 195–384 folds into the GMPS ATP-PPase domain; that stretch reads WSMASFAEEK…LGIPHHLVWR (190 aa). 222-228 contributes to the ATP binding site; that stretch reads SGGVDSS.

In terms of assembly, homodimer.

The enzyme catalyses XMP + L-glutamine + ATP + H2O = GMP + L-glutamate + AMP + diphosphate + 2 H(+). Its pathway is purine metabolism; GMP biosynthesis; GMP from XMP (L-Gln route): step 1/1. In terms of biological role, catalyzes the synthesis of GMP from XMP. The sequence is that of GMP synthase [glutamine-hydrolyzing] from Clostridium perfringens (strain 13 / Type A).